The primary structure comprises 339 residues: MLKQLLSKCAEGKALTEDEAYAAMNIIMSGEATDSQIASLLSMLRLRGETVDELVGFVRAMRDRMTAIEASDDVIDTCGTGGDGAATFNVSTAAAIVISSLGVKVAKHGNRAVSSKSGSADVLERLGIDIQTSPSAAKQALETKGLAFLFAPLYHAAMKHAAGPRKEIGFRTVFNLIGPLANPARCKRQVVGVYSTCYAEKLAEAMRRLGSEHVLFVTGRDGLDECSIAAETDVVELKDGAIRRFVIAPEDAGLPRGELADVQVRDPEESAALLEAVMAGTAPESAINIVALNAGAALYAAGKAETIAEGVAMAKEAILSKTAYEQLQRLRAKEVIHDA.

5-phospho-alpha-D-ribose 1-diphosphate is bound by residues Gly-79, 82–83 (GD), Thr-87, 89–92 (NVST), 107–115 (KHGNRAVSS), and Ser-119. Gly-79 lines the anthranilate pocket. Ser-91 lines the Mg(2+) pocket. Asn-110 lines the anthranilate pocket. Arg-165 is a binding site for anthranilate. Mg(2+) contacts are provided by Asp-224 and Glu-225.

The protein belongs to the anthranilate phosphoribosyltransferase family. In terms of assembly, homodimer. Mg(2+) serves as cofactor.

It carries out the reaction N-(5-phospho-beta-D-ribosyl)anthranilate + diphosphate = 5-phospho-alpha-D-ribose 1-diphosphate + anthranilate. It participates in amino-acid biosynthesis; L-tryptophan biosynthesis; L-tryptophan from chorismate: step 2/5. Catalyzes the transfer of the phosphoribosyl group of 5-phosphorylribose-1-pyrophosphate (PRPP) to anthranilate to yield N-(5'-phosphoribosyl)-anthranilate (PRA). In Geobacillus kaustophilus (strain HTA426), this protein is Anthranilate phosphoribosyltransferase.